The following is an 80-amino-acid chain: Cytochrome c oxidase subunit 7A1, mitochondrial (80 aa).

The N-terminal 21 residues, 1-21, are a transit peptide targeting the mitochondrion; the sequence is MRALRVSQALVRSFSSTARNR. Residues 22 to 46 lie on the Mitochondrial matrix side of the membrane; sequence FENRVAEKQKLFQEDNGLPVHLKGG. The helical transmembrane segment at 47-75 threads the bilayer; sequence ATDNILYRVTMTLCLGGTLYSLYCLGWAS. Over 76-80 the chain is Mitochondrial intermembrane; it reads FPHKK.

The protein belongs to the cytochrome c oxidase VIIa family. Component of the complex IV (CIV, cytochrome c oxidase), a multisubunit enzyme composed of 14 subunits. The complex is composed of a catalytic core of 3 subunits MT-CO1, MT-CO2 and MT-CO3, encoded in the mitochondrial DNA, and 11 supernumerary subunits COX4I1 (or COX4I2), COX5A, COX5B, COX6A2 (or COX6A1), COX6B1 (or COX6B2), COX6C, COX7A1 (or COX7A2), COX7B, COX7C, COX8B and NDUFA4, which are encoded in the nuclear genome. The complex exists as a monomer or a dimer and forms supercomplexes (SCs) in the inner mitochondrial membrane with NADH-ubiquinone oxidoreductase (complex I, CI) and ubiquinol-cytochrome c oxidoreductase (cytochrome b-c1 complex, complex III, CIII), resulting in different assemblies (supercomplex SCI(1)III(2)IV(1) and megacomplex MCI(2)III(2)IV(2)).

Its subcellular location is the mitochondrion inner membrane. The protein operates within energy metabolism; oxidative phosphorylation. Functionally, component of the mitochondrial respiratory complex IV (CIV, also named cytochrome c oxidase complex), the last enzyme in the mitochondrial electron transport chain which drives oxidative phosphorylation. The CIV complex is the component of the respiratory chain that catalyzes the reduction of oxygen to water. Acts as an assembly factor that specifically drives the homodimerization of CIV complexes, mediating the formation of mitochondrial respiratory supercomplexes (respirasomes) containing two CIV: supercomplxes with two molecules of CIV show improved activity. Despite being highly expressed in brown adipose tissue, not required for thermogenesis. The protein is Cytochrome c oxidase subunit 7A1, mitochondrial (COX7A1) of Bos taurus (Bovine).